Reading from the N-terminus, the 686-residue chain is Methionine--tRNA ligase (686 aa).

A 'HIGH' region motif is present at residues 15 to 25; it reads PYTNGPIHIGH. Residues cysteine 147, cysteine 150, cysteine 160, and cysteine 163 each coordinate Zn(2+). Residues 336–340 carry the 'KMSKS' region motif; that stretch reads KLSTS. Residue threonine 339 coordinates ATP. The tRNA-binding domain occupies 584 to 686; the sequence is DFAKMDLRVG…AGVGNGEGIN (103 aa).

This sequence belongs to the class-I aminoacyl-tRNA synthetase family. MetG type 1 subfamily. Homodimer. Zn(2+) serves as cofactor.

It localises to the cytoplasm. It carries out the reaction tRNA(Met) + L-methionine + ATP = L-methionyl-tRNA(Met) + AMP + diphosphate. Its function is as follows. Is required not only for elongation of protein synthesis but also for the initiation of all mRNA translation through initiator tRNA(fMet) aminoacylation. This Flavobacterium psychrophilum (strain ATCC 49511 / DSM 21280 / CIP 103535 / JIP02/86) protein is Methionine--tRNA ligase.